The chain runs to 1154 residues: PAN2-PAN3 deadenylation complex catalytic subunit pan2 (1154 aa).

WD repeat units lie at residues 20-59, 102-145, and 276-315; these read GLPT…RYTS, THDE…DKLR, and ATVS…HFNE. A linker region spans residues 316–451; sequence MSKEVEFADV…GARISGESED (136 aa). Positions 452–821 constitute a USP domain; the sequence is DPLLKYSNVE…SPCVLAFQVR (370 aa). The Exonuclease domain maps to 870–1048; that stretch reads VALDTEFVDL…IEDARMALRL (179 aa). The a divalent metal cation site is built by aspartate 873, glutamate 875, aspartate 982, and aspartate 1041. A disordered region spans residues 1092–1154; that stretch reads PGTAVTMQNN…GEFFTGSPLK (63 aa). 2 stretches are compositionally biased toward polar residues: residues 1096 to 1109 and 1132 to 1141; these read VTMQ…TPST and LTPSNGTFSG.

The protein belongs to the peptidase C19 family. PAN2 subfamily. Forms a heterotrimer with an asymmetric homodimer of the regulatory subunit pan3 to form the poly(A)-nuclease (PAN) deadenylation complex. The cofactor is a divalent metal cation.

Its subcellular location is the cytoplasm. It carries out the reaction Exonucleolytic cleavage of poly(A) to 5'-AMP.. Its activity is regulated as follows. Positively regulated by the regulatory subunit pan3. Its function is as follows. Catalytic subunit of the poly(A)-nuclease (PAN) deadenylation complex, one of two cytoplasmic mRNA deadenylases involved in mRNA turnover. PAN specifically shortens poly(A) tails of RNA and the activity is stimulated by poly(A)-binding protein pab1. PAN deadenylation is followed by rapid degradation of the shortened mRNA tails by the CCR4-NOT complex. Deadenylated mRNAs are then degraded by two alternative mechanisms, namely exosome-mediated 3'-5' exonucleolytic degradation, or deadenylation-dependent mRNA decaping and subsequent 5'-3' exonucleolytic degradation by xrn1. May also be involved in post-transcriptional maturation of mRNA poly(A) tails. This chain is PAN2-PAN3 deadenylation complex catalytic subunit pan2, found in Emericella nidulans (strain FGSC A4 / ATCC 38163 / CBS 112.46 / NRRL 194 / M139) (Aspergillus nidulans).